The following is a 455-amino-acid chain: Ammonium transporter Rh type B (455 aa).

At 1-10 (MARIPRHRRL) the chain is on the cytoplasmic side. A helical transmembrane segment spans residues 11 to 31 (VLPLLCLLFQGATSLLFAIFV). At 32–58 (RYNHETDAALWHWGNHSNVDNEFYFRY) the chain is on the extracellular side. Residue Asn46 is glycosylated (N-linked (GlcNAc...) asparagine). The helical transmembrane segment at 59-79 (PSFQDVHVMVFVGFGFLMVFL) threads the bilayer. Topologically, residues 80–83 (QRYG) are cytoplasmic. Residues 84 to 104 (FSSVGFTFLVATFTLQWATLL) form a helical membrane-spanning segment. The Extracellular segment spans residues 105–121 (QGFLHSFHGGHIHIGVE). A helical transmembrane segment spans residues 122-142 (SLINADFCAGAVLISFGAVLG). Topologically, residues 143 to 148 (KTGPAQ) are cytoplasmic. The chain crosses the membrane as a helical span at residues 149–169 (LLLMALLEAVLFSVNEFILLS). At 170-176 (LLGVRDA) the chain is on the extracellular side. The chain crosses the membrane as a helical span at residues 177-197 (GGSMTIHTFGAYFGLFLSRVL). At 198–216 (YRSQLEKSRHRQTSVYNSD) the chain is on the cytoplasmic side. A helical membrane pass occupies residues 217–237 (LFAMIGTIFLWVFWPSFNSAP). Over 238-247 (TALGDGQHRT) the chain is Extracellular. Residues 248–270 (VVNTYYSLTASTLSTFALSALVS) traverse the membrane as a helical segment. Residues 271–274 (GDGR) lie on the Cytoplasmic side of the membrane. The helical transmembrane segment at 275 to 295 (LDMVHIQNAALAGGVVVGTAS) threads the bilayer. Glu296 is a topological domain (extracellular). A helical transmembrane segment spans residues 297–317 (MMLTPFGALAAGFLAGTVSTL). Over 318–340 (GYKFFTPILESRFKLQDTCGVHN) the chain is Cytoplasmic. Residues 341 to 361 (LHGMPGLLGAILGVLVAALAT) form a helical membrane-spanning segment. The Extracellular portion of the chain corresponds to 362 to 390 (HEAYGDGLQTVFPLIAKGQRSATSQAMYQ). The helical transmembrane segment at 391–411 (LFGMFVTLVFASVGGSLGGLL) threads the bilayer. At 412–455 (LKLPFLDSPPDSQCFEDQVYWEVPGEQEAETQRPLRTEEPDTQA) the chain is on the cytoplasmic side. The interval 413–421 (KLPFLDSPP) is interaction with ANK3.

It belongs to the ammonium transporter (TC 2.A.49) family. Rh subfamily. Interacts (via C-terminus) with ANK2 and ANK3; required for targeting to the basolateral membrane. N-glycosylated. Expressed in kidney by connecting segments and collecting tubules (at protein level).

It localises to the basolateral cell membrane. The protein localises to the cytoplasmic vesicle membrane. The enzyme catalyses NH4(+)(in) = NH4(+)(out). The catalysed reaction is methylamine(out) = methylamine(in). It carries out the reaction CO2(out) = CO2(in). In terms of biological role, ammonium transporter involved in the maintenance of acid-base homeostasis. Transports ammonium and its related derivative methylammonium across the basolateral plasma membrane of epithelial cells likely contributing to renal transepithelial ammonia transport and ammonia metabolism. May transport either NH4(+) or NH3 ammonia species predominantly mediating an electrogenic NH4(+) transport. May act as a CO2 channel providing for renal acid secretion. The chain is Ammonium transporter Rh type B (Rhbg) from Rattus norvegicus (Rat).